The following is an 88-amino-acid chain: Small ribosomal subunit protein uS15 (88 aa).

It belongs to the universal ribosomal protein uS15 family. Part of the 30S ribosomal subunit. Forms a bridge to the 50S subunit in the 70S ribosome, contacting the 23S rRNA.

Its function is as follows. One of the primary rRNA binding proteins, it binds directly to 16S rRNA where it helps nucleate assembly of the platform of the 30S subunit by binding and bridging several RNA helices of the 16S rRNA. In terms of biological role, forms an intersubunit bridge (bridge B4) with the 23S rRNA of the 50S subunit in the ribosome. This Francisella tularensis subsp. novicida (strain U112) protein is Small ribosomal subunit protein uS15.